The chain runs to 145 residues: Maximins 5/H4 type 2 (145 aa).

The first 18 residues, Met1 to Ala18, serve as a signal peptide directing secretion. 2 consecutive propeptides follow at residues Arg19–Arg43 and Thr74–Arg124. Position 144 is a leucine amide (Leu144).

The protein belongs to the bombinin family. Expressed by the skin glands.

It localises to the secreted. Maximin-5 shows antibacterial activity against both Gram-positive and Gram-negative bacteria. The only exception is the resistance of E.coli. Also shows antimicrobial activity against fungi C.albicans, A.flavus and P.uticale. It has little hemolytic activity. It does not possess a significant cytotoxicity against tumor cell lines. It does not possess a significant anti-HIV activity. Functionally, maximin-H4 shows antibacterial activity against both Gram-positive and Gram-negative bacteria. It also shows antimicrobial activity against the fungus C.albicans. Shows strong hemolytic activity. This is Maximins 5/H4 type 2 from Bombina maxima (Giant fire-bellied toad).